A 233-amino-acid chain; its full sequence is Orotidine 5'-phosphate decarboxylase (233 aa).

Substrate is bound by residues Asp11, Lys34, 61 to 70 (DLKLHDIPNT), Thr117, Arg179, Gln188, Gly208, and Arg209. Lys63 functions as the Proton donor in the catalytic mechanism.

Belongs to the OMP decarboxylase family. Type 1 subfamily. Homodimer.

It carries out the reaction orotidine 5'-phosphate + H(+) = UMP + CO2. It functions in the pathway pyrimidine metabolism; UMP biosynthesis via de novo pathway; UMP from orotate: step 2/2. In terms of biological role, catalyzes the decarboxylation of orotidine 5'-monophosphate (OMP) to uridine 5'-monophosphate (UMP). In Streptococcus pneumoniae (strain JJA), this protein is Orotidine 5'-phosphate decarboxylase.